Here is a 190-residue protein sequence, read N- to C-terminus: Protein PLANT CADMIUM RESISTANCE 8 (190 aa).

The disordered stretch occupies residues 1–31 (MGRVTTPSEEDSNNGLPVQQPGTPNQRTRVP). Positions 13-28 (NNGLPVQQPGTPNQRT) are enriched in polar residues. Position 23 is a phosphothreonine (Thr23). Residues 94–113 (LGTFMYLLMMPALCSHWVMG) form a helical membrane-spanning segment.

This sequence belongs to the cornifelin family.

It localises to the cell membrane. Functionally, may be involved in heavy metals transport. The protein is Protein PLANT CADMIUM RESISTANCE 8 (PCR8) of Arabidopsis thaliana (Mouse-ear cress).